Reading from the N-terminus, the 394-residue chain is Ceramide glucosyltransferase (394 aa).

At 1 to 10 the chain is on the lumenal side; sequence MALLDLAQEG. A helical transmembrane segment spans residues 11 to 32; sequence MALFGFVLFVVLWLMHFMSIIY. The Cytoplasmic segment spans residues 33 to 195; that stretch reads TRLHLNKKAT…QVYFGTSHPR (163 aa). Residue D92 is a short sequence motif, D1. K117 carries the N6-acetyllysine modification. Residue D144 is a short sequence motif, D2. The chain crosses the membrane as a helical span at residues 196-215; it reads SYISANVTGFKCVTGMSCLM. The Lumenal portion of the chain corresponds to 216 to 287; it reads RKDVLDQAGG…KLRINMLPAT (72 aa). Position 236 (D236) is a short sequence motif, D3. D236 serves as the catalytic Proton acceptor. The short motif at 272-276 is the (Q/R)XXRW element; it reads RMIRW. The helical transmembrane segment at 288-304 threads the bilayer; that stretch reads IICEPISECFVASLIIG. The Cytoplasmic segment spans residues 305-309; that stretch reads WAAHH. A helical membrane pass occupies residues 310-328; the sequence is VFRWDIMVFFMCHCLAWFI. At 329–348 the chain is on the lumenal side; sequence FDYIQLRGVQGGTLCFSKLD. Residues 349–369 form a helical membrane-spanning segment; sequence YAVAWFIRESMTIYIFLSALW. The Cytoplasmic segment spans residues 370 to 394; sequence DPTISWRTGRYRLRCGGTAEEILDV.

Belongs to the glycosyltransferase 2 family. Interacts with RTN1; regulates the ceramide glucosyltransferase activity of UGCG.

The protein resides in the golgi apparatus membrane. It carries out the reaction an N-acylsphing-4-enine + UDP-alpha-D-glucose = a beta-D-glucosyl-(1&lt;-&gt;1')-N-acylsphing-4-enine + UDP + H(+). The enzyme catalyses UDP-alpha-D-xylose + an N-acylsphing-4-enine = a beta-D-xylosyl-(1&lt;-&gt;1')-N-acylsphing-4-enine + UDP + H(+). It catalyses the reaction N-(9Z-octadecenoyl)-sphing-4-enine + UDP-alpha-D-xylose = beta-D-xylosyl-(1&lt;-&gt;1')-N-(9Z-octadecenoyl)-sphing-4-enine + UDP + H(+). It functions in the pathway lipid metabolism; sphingolipid metabolism. Functionally, participates in the initial step of the glucosylceramide-based glycosphingolipid/GSL synthetic pathway at the cytosolic surface of the Golgi. Catalyzes the transfer of glucose from UDP-glucose to ceramide to produce glucosylceramide/GlcCer (such as beta-D-glucosyl-(1&lt;-&gt;1')-N-acylsphing-4-enine). Glucosylceramide is the core component of glycosphingolipids/GSLs, amphipathic molecules consisting of a ceramide lipid moiety embedded in the outer leaflet of the membrane, linked to one of hundreds of different externally oriented oligosaccharide structures. Glycosphingolipids are essential components of membrane microdomains that mediate membrane trafficking and signal transduction. They are implicated in many fundamental cellular processes, including growth, differentiation, migration, morphogenesis, cell-to-cell and cell-to-matrix interactions. They are required for instance in the proper development and functioning of the nervous system. As an example of their role in signal transduction, they regulate the leptin receptor/LEPR in the leptin-mediated signaling pathway. They also play an important role in the establishment of the skin barrier regulating keratinocyte differentiation and the proper assembly of the cornified envelope. The biosynthesis of GSLs is also required for the proper intestinal endocytic uptake of nutritional lipids. Catalyzes the synthesis of xylosylceramide/XylCer (such as beta-D-xylosyl-(1&lt;-&gt;1')-N-acylsphing-4-enine) using UDP-Xyl as xylose donor. This chain is Ceramide glucosyltransferase, found in Mus musculus (Mouse).